Here is a 137-residue protein sequence, read N- to C-terminus: Large ribosomal subunit protein uL16 (137 aa).

The protein belongs to the universal ribosomal protein uL16 family. As to quaternary structure, part of the 50S ribosomal subunit.

In terms of biological role, binds 23S rRNA and is also seen to make contacts with the A and possibly P site tRNAs. In Chlamydia abortus (strain DSM 27085 / S26/3) (Chlamydophila abortus), this protein is Large ribosomal subunit protein uL16.